A 542-amino-acid polypeptide reads, in one-letter code: MAELDQLPDESSSAKALVSLKEGSLSNTWNEKYSSLQKTPVWKGRNTSSAVEMPFRNSKRSRLFSDEDDRQINTRSPKRNQRVAMVPQKFTATMSTPDKKASQKIGFRLRNLLKLPKAHKWCIYEWFYSNIDKPLFEGDNDFCVCLKESFPNLKTRKLTRVEWGKIRRLMGKPRRCSSAFFEEERSALKQKRQKIRLLQQRKVADVSQFKDLPDEIPLPLVIGTKVTARLRGVHDGLFTGQIDAVDTLNATYRVTFDRTGLGTHTIPDYEVLSNEPHETMPIAAFGQKQRPSRFFMTPPRLHYTPPLQSPIIDNDPLLGQSPWRSKISGSDTETLGGFPVEFLIQVTRLSKILMIKKEHIKKLREMNTEAEKLKSYSMPISIEFQRRYATIVLELEQLNKDLNKVLHKVQQYCYELAPDQGLQPADQPTDMRRRCEEEAQEIVRHANSSTGQPCVENENLTDLISRLTAILLQIKCLAEGGDLNSFEFKSLTDSLNDIKSTIDASNISCFQNNVEIHVAHIQSGLSQMGNLHAFAANNTNRD.

Ala-2 is modified (N-acetylalanine). The interval 2–296 is sufficient for interaction with RB1; the sequence is AELDQLPDES…QKQRPSRFFM (295 aa). Lys-21 is covalently cross-linked (Glycyl lysine isopeptide (Lys-Gly) (interchain with G-Cter in SUMO2)). A phosphoserine mark is found at Ser-65 and Ser-95. Phosphothreonine occurs at positions 96 and 304. Residues Ser-309 and Ser-321 each carry the phosphoserine modification. Residues 354-413 adopt a coiled-coil conformation; it reads MIKKEHIKKLREMNTEAEKLKSYSMPISIEFQRRYATIVLELEQLNKDLNKVLHKVQQYC.

It belongs to the lin-9 family. As to quaternary structure, component of the DREAM complex (also named LINC complex) at least composed of E2F4, E2F5, LIN9, LIN37, LIN52, LIN54, MYBL1, MYBL2, RBL1, RBL2, RBBP4, TFDP1 and TFDP2. The complex exists in quiescent cells where it represses cell cycle-dependent genes. It dissociates in S phase when LIN9, LIN37, LIN52 and LIN54 form a subcomplex that binds to MYBL2. Interacts with RB1. Expressed in thymus and testis.

The protein localises to the nucleus. It localises to the nucleoplasm. Acts as a tumor suppressor. Inhibits DNA synthesis. Its ability to inhibit oncogenic transformation is mediated through its association with RB1. Plays a role in the expression of genes required for the G1/S transition. The protein is Protein lin-9 homolog (LIN9) of Homo sapiens (Human).